The following is a 147-amino-acid chain: MKVILVKDVKNVGKAGEIVNVSDGYGRNYLLPRGLAIEATESNVKALNEKKKAEEKKRQQELEEAKEMAQKLSNLSLVLKVKAGENGKLFGSVTSKDVEEALKEKGFDIDKKKIVFNENVKTTGTYYVDIKLYQGVTAKVKVDVVAE.

Belongs to the bacterial ribosomal protein bL9 family.

Functionally, binds to the 23S rRNA. This is Large ribosomal subunit protein bL9 from Thermoanaerobacter pseudethanolicus (strain ATCC 33223 / 39E) (Clostridium thermohydrosulfuricum).